The chain runs to 1073 residues: Collagen alpha-2(I) chain (1073 aa).

A disordered region spans residues 1-939; sequence APDPGPGPMG…PGPAGGGYDV (939 aa). Low complexity-rich tracts occupy residues 100 to 148, 178 to 187, and 194 to 215; these read EPGA…AAGP, EPGPNGAVGP, and PGNN…AGAP. Pro residues predominate over residues 217-227; it reads FPGPRGGPGPQ. A compositionally biased stretch (low complexity) spans 229-239; that stretch reads PQGAAGQRGLA. The segment covering 246-255 has biased composition (gly residues); it reads GVKGDGGPKG. Low complexity-rich tracts occupy residues 296–315, 321–348, 386–399, and 411–423; these read MPGA…PGDA, SGPA…AGPA, APGP…TGAT, and QGAA…QGLP. A compositionally biased stretch (gly residues) spans 424-433; the sequence is GPAGGAGEAG. Positions 458-468 are enriched in low complexity; it reads NPGAAGASGPQ. Residues 481–508 show a composition bias toward gly residues; the sequence is GTDGGKGEPGAAGAAGGPGHQGPGGMPG. Residues 519-530 are compositionally biased toward basic and acidic residues; it reads KGEKGEAGHRGP. 2 stretches are compositionally biased toward low complexity: residues 561–575 and 584–597; these read SGSF…ARGA and PAGA…PGAD. Residues 607–616 show a composition bias toward gly residues; it reads GPSGGKGESG. Composition is skewed to low complexity over residues 617–642, 653–680, and 708–729; these read PAGP…TGAR, FPGA…PAGK, and SGEK…SGPL. Residues 745–757 are compositionally biased toward gly residues; that stretch reads GSPGGAGGVGEPG. Residues 758–774 show a composition bias toward low complexity; the sequence is RVGPAGPAGARGNLGLP. The segment covering 811–820 has biased composition (gly residues); sequence GESGPGGAAG. A compositionally biased stretch (low complexity) spans 821–836; the sequence is AVGPAGARGAAGPSGP. Residues 837–851 are compositionally biased toward basic and acidic residues; sequence RGEKGVAGEKGERGL. 2 stretches are compositionally biased toward low complexity: residues 857 to 876 and 906 to 917; these read LQGM…AGPN and PGARGPPGYVGP. The segment covering 918 to 932 has biased composition (pro residues); that stretch reads AGPPGSPGLPGPPGP. One can recognise a Fibrillar collagen NC1 domain in the interval 1039 to 1073; it reads RTNKPSRLPLLDLAPLDLGGADQEFGLDLGPVCFK.

The protein belongs to the fibrillar collagen family.

The protein localises to the secreted. Its subcellular location is the extracellular space. It localises to the extracellular matrix. The polypeptide is Collagen alpha-2(I) chain (Epinephelus aeneus (White grouper)).